Reading from the N-terminus, the 263-residue chain is Phosphoinositide-3-kinase-interacting protein 1 (263 aa).

The first 21 residues, 1–21, serve as a signal peptide directing secretion; it reads MLLAWVQAFLVSNMLLAEAYG. Topologically, residues 22-168 are extracellular; the sequence is SGGCFWDNGH…NSKEKKDLGT (147 aa). Positions 24–101 constitute a Kringle domain; sequence GCFWDNGHLY…EKRPCEDLRC (78 aa). 3 disulfides stabilise this stretch: C25/C101, C46/C82, and C70/C96. An O-linked (GalNAc...) serine glycan is attached at S39. N66 is a glycosylation site (N-linked (GlcNAc...) (complex) asparagine). Residues 169–189 traverse the membrane as a helical segment; the sequence is LGYVLGITMMVIIIAIGAGII. At 190–263 the chain is on the cytoplasmic side; that stretch reads LGYSYKRGKD…LMGQAGTPGA (74 aa). A compositionally biased stretch (polar residues) spans 242–251; that stretch reads QTPVDPQEGT. Residues 242-263 form a disordered region; that stretch reads QTPVDPQEGTTPLMGQAGTPGA.

Post-translationally, N- and O-glycosylated. O-glycosylated with core 1 or possibly core 8 glycans. N-glycan heterogeneity at Asn-66: dHex1Hex5HexNAc4 (major) and dHex1Hex6HexNAc5 (minor).

The protein resides in the cell membrane. In terms of biological role, negative regulator of hepatic phosphatidylinositol 3-kinase (PI3K) activity. The protein is Phosphoinositide-3-kinase-interacting protein 1 (PIK3IP1) of Homo sapiens (Human).